A 213-amino-acid chain; its full sequence is Redox-sensing transcriptional repressor Rex (213 aa).

The segment at residues 17–56 (LYYRIFKRFHSENIEKASSKQIAEAIGIDSATVRRDFSYF) is a DNA-binding region (H-T-H motif). 91–96 (GVGNIG) is an NAD(+) binding site.

Belongs to the transcriptional regulatory Rex family. In terms of assembly, homodimer.

Its subcellular location is the cytoplasm. Its function is as follows. Modulates transcription in response to changes in cellular NADH/NAD(+) redox state. In Streptococcus mutans serotype c (strain ATCC 700610 / UA159), this protein is Redox-sensing transcriptional repressor Rex.